A 131-amino-acid chain; its full sequence is Small ribosomal subunit protein uS8 (131 aa).

This sequence belongs to the universal ribosomal protein uS8 family. Part of the 30S ribosomal subunit. Contacts proteins S5 and S12.

One of the primary rRNA binding proteins, it binds directly to 16S rRNA central domain where it helps coordinate assembly of the platform of the 30S subunit. This is Small ribosomal subunit protein uS8 from Bordetella parapertussis (strain 12822 / ATCC BAA-587 / NCTC 13253).